We begin with the raw amino-acid sequence, 434 residues long: MLRCLYHWHRPVLNRRWSRLCLPKQYLFTMKLQSPEFQSLFTEGLKSLTELFVKENHELRIAGGAVRDLLNGVKPQDIDFATTATPTQMKEMFQSAGIRMINNRGEKHGTITARLHEENFEITTLRIDVTTDGRHAEVEFTTDWQKDAERRDLTINSMFLGFDGTLFDYFNGYEDLKNKKVRFVGHAKQRIQEDYLRILRYFRFYGRIVDKPGDHDPETLEAIAENAKGLAGISGERIWVELKKILVGNHVNHLIHLIYDLDVAPYIGLPANASLEEFDKVSKNVDGFSPKPVTLLASLFKVQDDVTKLDLRLKIAKEEKNLGLFIVKNRKDLIKATDSSDPLKPYQDFIIDSREPDATTRVCELLKYQGEHCLLKEMQQWSIPPFPVSGHDIRKVGISSGKEIGALLQQLREQWKKSGYQMEKDELLSYIKKT.

The transit peptide at 1-41 (MLRCLYHWHRPVLNRRWSRLCLPKQYLFTMKLQSPEFQSLF) directs the protein to the mitochondrion. ATP-binding residues include G64 and R67. CTP-binding residues include G64 and R67. Mg(2+) is bound by residues D77 and D79. Residues R151, D194, R197, R200, and R203 each coordinate ATP. The CTP site is built by R151, D194, R197, R200, and R203. Phosphoserine is present on S400. Residue K402 is modified to N6-acetyllysine.

This sequence belongs to the tRNA nucleotidyltransferase/poly(A) polymerase family. Monomer, and homodimer; disulfide-linked. Mg(2+) serves as cofactor.

The protein localises to the mitochondrion. Its subcellular location is the cytoplasm. The protein resides in the nucleus. It catalyses the reaction a tRNA precursor + 2 CTP + ATP = a tRNA with a 3' CCA end + 3 diphosphate. The catalysed reaction is a tRNA with a 3' CCA end + 2 CTP + ATP = a tRNA with a 3' CCACCA end + 3 diphosphate. In terms of biological role, nucleotidyltransferase that catalyzes the addition and repair of the essential 3'-terminal CCA sequence in tRNAs, which is necessary for the attachment of amino acids to the 3' terminus of tRNA molecules, using CTP and ATP as substrates. tRNA 3'-terminal CCA addition is required both for tRNA processing and repair. Promotes tRNA repair and recycling downstream of the ribosome-associated quality control (RQC) pathway by mediating addition of the tRNA 3'-terminal CCA following cleavage by ANKZF1 and repair by ELAC1. Also involved in tRNA surveillance by mediating tandem CCA addition to generate a CCACCA at the 3' terminus of unstable tRNAs and tRNA-like transcripts. While stable tRNAs receive only 3'-terminal CCA, unstable tRNAs beginning with GG are marked with CCACCA and rapidly degraded. The structural flexibility of RNA controls the choice between CCA versus CCACCA addition: following the first CCA addition cycle, nucleotide-binding to the active site triggers a clockwise screw motion, producing torque on the RNA. This ejects stable RNAs, whereas unstable RNAs are refolded while bound to the enzyme and subjected to a second CCA catalytic cycle. Its function is as follows. Adds 2 C residues (CC-) to the 3' terminus of tRNA molecules instead of a complete CCA end as isoform 1 does (in vitro). In Homo sapiens (Human), this protein is CCA tRNA nucleotidyltransferase 1, mitochondrial.